Consider the following 279-residue polypeptide: Pantothenate synthetase (279 aa).

Position 26–33 (26–33) interacts with ATP; the sequence is MGNLHEGH. The Proton donor role is filled by His33. Gln57 serves as a coordination point for (R)-pantoate. Gln57 contacts beta-alanine. Residue 144 to 147 coordinates ATP; that stretch reads GKKD. Gln150 contacts (R)-pantoate. Residues Val173 and 181–184 contribute to the ATP site; that span reads LSSR.

This sequence belongs to the pantothenate synthetase family. Homodimer.

The protein resides in the cytoplasm. It catalyses the reaction (R)-pantoate + beta-alanine + ATP = (R)-pantothenate + AMP + diphosphate + H(+). It functions in the pathway cofactor biosynthesis; (R)-pantothenate biosynthesis; (R)-pantothenate from (R)-pantoate and beta-alanine: step 1/1. Functionally, catalyzes the condensation of pantoate with beta-alanine in an ATP-dependent reaction via a pantoyl-adenylate intermediate. This Burkholderia vietnamiensis (strain G4 / LMG 22486) (Burkholderia cepacia (strain R1808)) protein is Pantothenate synthetase.